A 159-amino-acid polypeptide reads, in one-letter code: MDPAEMRYLEEEDGPLMKTIKGSITGFGAGTIYGTILATWKDVPRVERNVALPGLIRTLKMMGTHGLTFAAIGGVYIGVEQLVQNFRSKRDFYNGAIGGFVAGASVLGYRARSIPTAIAAGATLAVTSALIDSGGQTTRVDNGREYYPYTVEKRAEADS.

Met-1 carries the post-translational modification N-acetylmethionine. The tract at residues 1 to 65 (MDPAEMRYLE…IRTLKMMGTH (65 aa)) is contains beta strands. 3 helical membrane-spanning segments follow: residues 24–40 (ITGF…LATW), 62–79 (MGTH…YIGV), and 92–109 (FYNG…VLGY).

The protein belongs to the Tim17/Tim22/Tim23 family. Plastid outer envelope porin OEP16 (TC 1.B.30) subfamily. As to quaternary structure, homodimer and oligomers in membrane. Part of both the NADH-ubiquinone oxidoreductase complex I and of the TIM17:23 complex. Interacts with TIM23-2.

The protein localises to the plastid. It is found in the chloroplast outer membrane. Its subcellular location is the mitochondrion outer membrane. The protein resides in the mitochondrion inner membrane. Its function is as follows. Voltage-dependent high-conductance channel with a slight cation-selectivity; selective for amino acids but excludes triosephosphates or uncharged sugars. Non-essential amino acid-selective channel protein and translocation pore for NADPH:protochlorophyllide oxidoreductase A (PORA) and possibly PORB. The protein is Outer envelope pore protein 16-3, chloroplastic/mitochondrial (OEP163) of Arabidopsis thaliana (Mouse-ear cress).